Reading from the N-terminus, the 117-residue chain is Ribulose bisphosphate carboxylase small subunit 1 (117 aa).

Belongs to the RuBisCO small chain family. Heterohexadecamer of 8 large and 8 small subunits.

RuBisCO catalyzes two reactions: the carboxylation of D-ribulose 1,5-bisphosphate, the primary event in carbon dioxide fixation, as well as the oxidative fragmentation of the pentose substrate. Both reactions occur simultaneously and in competition at the same active site. Although the small subunit is not catalytic it is essential for maximal activity. The chain is Ribulose bisphosphate carboxylase small subunit 1 from Hydrogenovibrio marinus.